Consider the following 307-residue polypeptide: MTDSSYDAQAVRSWLQGLQTQIADTLGAFDGTPFATDAWQRAPGEKLRGGGYTRILEGGNFFERAGIGFSDVAGDALPASASAARPQLAGRGFEAMGVSLVLHPHNPHCPTVHMNVRLLIATKAGEEPVFWFGGGMDLTPFYGYEEDAQHFHRTCRDALQPYGADLYPSFKRWCDEYFFLRHRNEPRGIGGIFFDDFSAPGFDQSFAMLRSVGDAFLKAYLPIIEKRRNIPYGQAERDFQAYRRGRYVEFNLVFDRGTLFGLQSGGRTESILMSMPPVVNWRYNWQPEPGTPEARLYSDFLVPREWV.

Serine 99 is a substrate binding site. A divalent metal cation is bound by residues histidine 103 and histidine 113. Residue histidine 113 is the Proton donor of the active site. 115-117 (NVR) contacts substrate. Residues histidine 152 and histidine 182 each coordinate a divalent metal cation. Residues 247 to 282 (YVEFNLVFDRGTLFGLQSGGRTESILMSMPPVVNWR) form an important for dimerization region. 265-267 (GGR) contacts substrate.

The protein belongs to the aerobic coproporphyrinogen-III oxidase family. As to quaternary structure, homodimer. The cofactor is a divalent metal cation.

It localises to the cytoplasm. It catalyses the reaction coproporphyrinogen III + O2 + 2 H(+) = protoporphyrinogen IX + 2 CO2 + 2 H2O. It participates in porphyrin-containing compound metabolism; protoporphyrin-IX biosynthesis; protoporphyrinogen-IX from coproporphyrinogen-III (O2 route): step 1/1. In terms of biological role, involved in the heme biosynthesis. Catalyzes the aerobic oxidative decarboxylation of propionate groups of rings A and B of coproporphyrinogen-III to yield the vinyl groups in protoporphyrinogen-IX. The polypeptide is Oxygen-dependent coproporphyrinogen-III oxidase (Paraburkholderia xenovorans (strain LB400)).